Here is a 412-residue protein sequence, read N- to C-terminus: uncharacterized protein (412 aa).

The [4Fe-4S] cluster site is built by Cys62, Cys68, Cys71, and Cys143. Positions 243, 270, 290, and 338 each coordinate S-adenosyl-L-methionine. Cys364 (nucleophile) is an active-site residue.

This sequence belongs to the class I-like SAM-binding methyltransferase superfamily. RNA M5U methyltransferase family.

This is an uncharacterized protein from Mesorhizobium japonicum (strain LMG 29417 / CECT 9101 / MAFF 303099) (Mesorhizobium loti (strain MAFF 303099)).